A 78-amino-acid polypeptide reads, in one-letter code: NAD(P)H-quinone oxidoreductase subunit O (78 aa).

This sequence belongs to the complex I NdhO subunit family. In terms of assembly, NDH-1 can be composed of about 15 different subunits; different subcomplexes with different compositions have been identified which probably have different functions.

It is found in the cellular thylakoid membrane. It carries out the reaction a plastoquinone + NADH + (n+1) H(+)(in) = a plastoquinol + NAD(+) + n H(+)(out). The enzyme catalyses a plastoquinone + NADPH + (n+1) H(+)(in) = a plastoquinol + NADP(+) + n H(+)(out). Its function is as follows. NDH-1 shuttles electrons from an unknown electron donor, via FMN and iron-sulfur (Fe-S) centers, to quinones in the respiratory and/or the photosynthetic chain. The immediate electron acceptor for the enzyme in this species is believed to be plastoquinone. Couples the redox reaction to proton translocation, and thus conserves the redox energy in a proton gradient. Cyanobacterial NDH-1 also plays a role in inorganic carbon-concentration. The polypeptide is NAD(P)H-quinone oxidoreductase subunit O (Prochlorococcus marinus (strain MIT 9301)).